A 268-amino-acid polypeptide reads, in one-letter code: Shikimate dehydrogenase (NADP(+)) (268 aa).

Shikimate-binding positions include 13-15 and T60; that span reads SLS. K64 functions as the Proton acceptor in the catalytic mechanism. E76 lines the NADP(+) pocket. Shikimate is bound by residues N85 and D100. NADP(+)-binding positions include 124 to 128, 148 to 153, and I209; these read GAGGA and NRTMAR. Y211 lines the shikimate pocket. G232 is an NADP(+) binding site.

This sequence belongs to the shikimate dehydrogenase family. As to quaternary structure, homodimer.

The catalysed reaction is shikimate + NADP(+) = 3-dehydroshikimate + NADPH + H(+). It participates in metabolic intermediate biosynthesis; chorismate biosynthesis; chorismate from D-erythrose 4-phosphate and phosphoenolpyruvate: step 4/7. Its function is as follows. Involved in the biosynthesis of the chorismate, which leads to the biosynthesis of aromatic amino acids. Catalyzes the reversible NADPH linked reduction of 3-dehydroshikimate (DHSA) to yield shikimate (SA). The protein is Shikimate dehydrogenase (NADP(+)) of Staphylococcus aureus (strain MRSA252).